We begin with the raw amino-acid sequence, 271 residues long: Probable L,D-transpeptidase 3 (271 aa).

The 144-residue stretch at 127 to 270 folds into the L,D-TPase catalytic domain; that stretch reads VVGVASISQH…VDIGDPVIVQ (144 aa). His228 (proton donor/acceptor) is an active-site residue. Cys246 functions as the Nucleophile in the catalytic mechanism.

The protein operates within cell wall biogenesis; peptidoglycan biosynthesis. With respect to regulation, is irreversibly inactivated by the beta-lactam carbapenems via the formation of a covalent adduct resulting from acylation of the catalytic Cys. Imipenem is the most efficient drug for in vitro LdtMt3/Rv1433 inactivation. Functionally, probable L,D-transpeptidase that may perform as-yet-unknown cross-linking reactions in M.tuberculosis. Is not able to generate 3-&gt;3 cross-links in peptidoglycan, using tetrapeptide stems as acyl donor substrates. May function in the anchoring of proteins to peptidoglycan. This chain is Probable L,D-transpeptidase 3, found in Mycobacterium tuberculosis (strain ATCC 25618 / H37Rv).